The chain runs to 309 residues: tRNA-cytidine(32) 2-sulfurtransferase (309 aa).

The PP-loop motif motif lies at 45–50 (SGGKDS). [4Fe-4S] cluster is bound by residues C120, C123, and C211.

The protein belongs to the TtcA family. In terms of assembly, homodimer. It depends on Mg(2+) as a cofactor. Requires [4Fe-4S] cluster as cofactor.

It is found in the cytoplasm. The catalysed reaction is cytidine(32) in tRNA + S-sulfanyl-L-cysteinyl-[cysteine desulfurase] + AH2 + ATP = 2-thiocytidine(32) in tRNA + L-cysteinyl-[cysteine desulfurase] + A + AMP + diphosphate + H(+). Its pathway is tRNA modification. Catalyzes the ATP-dependent 2-thiolation of cytidine in position 32 of tRNA, to form 2-thiocytidine (s(2)C32). The sulfur atoms are provided by the cysteine/cysteine desulfurase (IscS) system. The chain is tRNA-cytidine(32) 2-sulfurtransferase from Psychromonas ingrahamii (strain DSM 17664 / CCUG 51855 / 37).